The primary structure comprises 141 residues: Elongation factor G, chloroplastic (141 aa).

The region spanning lysine 12–methionine 141 is the tr-type G domain. GTP-binding positions include alanine 21–threonine 28 and aspartate 85–histidine 89.

It belongs to the TRAFAC class translation factor GTPase superfamily. Classic translation factor GTPase family. EF-G/EF-2 subfamily.

The protein localises to the plastid. It is found in the chloroplast. It functions in the pathway protein biosynthesis; polypeptide chain elongation. In terms of biological role, chloroplast-localized elongation factor EF-G involved in protein synthesis in plastids. Catalyzes the GTP-dependent ribosomal translocation step during translation elongation. During this step, the ribosome changes from the pre-translocational (PRE) to the post-translocational (POST) state as the newly formed A-site-bound peptidyl-tRNA and P-site-bound deacylated tRNA move to the P and E sites, respectively. Catalyzes the coordinated movement of the two tRNA molecules, the mRNA and conformational changes in the ribosome. The chain is Elongation factor G, chloroplastic (fusA) from Pisum sativum (Garden pea).